Reading from the N-terminus, the 436-residue chain is 3-ketoacyl-CoA thiolase (436 aa).

Cys-99 functions as the Acyl-thioester intermediate in the catalytic mechanism. Catalysis depends on proton acceptor residues His-392 and Cys-422.

It belongs to the thiolase-like superfamily. Thiolase family. As to quaternary structure, heterotetramer of two alpha chains (FadJ) and two beta chains (FadI).

Its subcellular location is the cytoplasm. The enzyme catalyses an acyl-CoA + acetyl-CoA = a 3-oxoacyl-CoA + CoA. The protein operates within lipid metabolism; fatty acid beta-oxidation. In terms of biological role, catalyzes the final step of fatty acid oxidation in which acetyl-CoA is released and the CoA ester of a fatty acid two carbons shorter is formed. In Escherichia coli O157:H7, this protein is 3-ketoacyl-CoA thiolase.